Reading from the N-terminus, the 178-residue chain is Large ribosomal subunit protein bL25 (178 aa).

The protein belongs to the bacterial ribosomal protein bL25 family. CTC subfamily. As to quaternary structure, part of the 50S ribosomal subunit; part of the 5S rRNA/L5/L18/L25 subcomplex. Contacts the 5S rRNA. Binds to the 5S rRNA independently of L5 and L18.

Functionally, this is one of the proteins that binds to the 5S RNA in the ribosome where it forms part of the central protuberance. In Helicobacter pylori (strain J99 / ATCC 700824) (Campylobacter pylori J99), this protein is Large ribosomal subunit protein bL25.